Here is a 391-residue protein sequence, read N- to C-terminus: MFEEKNALRGTEIHRRERFDPGPELRALMAEGRMSVMESEESPGGRTGWLATGYEETRQVLGSDKFSAKLLFGGTAAGRIWPGFLNQYDPPEHTRLRRMVASAFTVRRMRDFRPRIEAVVKATLDDIEATGGPVDFVPRFAWPIATTVICDFLGIPRDDQAELSRVLHASRSERSGKRRVAAGNKYWTYMGQVAAKTRRDPGDDMFGAVVREHGDDITDAELLGVAAFVMGASGDQVARFLSAGAWLMVEHPEQFAVLRDDPDSVPDWLNEVARYLTSDEKTTPRIALEDVRIGDQLVKKGDAVTCSLLASNRHRFPDPEDRFDITREKPSHVTFGHGIHHCLGRPLAEMVFRTAIPALAHRFPTLRLAEPDREIKLGPPPFDVEALLLDW.

Positions 1 to 22 (MFEEKNALRGTEIHRRERFDPG) are disordered. A heme-binding site is contributed by C342.

Belongs to the cytochrome P450 family. Heme serves as cofactor.

It participates in antibiotic biosynthesis; vancomycin biosynthesis. Its function is as follows. Involved in the coupling of aromatic side chains of the heptapeptide of vancomycin. This Amycolatopsis orientalis (Nocardia orientalis) protein is Cytochrome P450 165A3 (cyp165A3).